The following is a 399-amino-acid chain: Carbamoyl phosphate synthase arginine-specific small chain (399 aa).

The Glutamine amidotransferase type-1 domain maps to 187-379; sequence DVALVDCGVK…VERMRCYRKL (193 aa). Catalysis depends on Cys-267, which acts as the Nucleophile. Active-site residues include His-352 and Glu-354.

It belongs to the CarA family. As to quaternary structure, heterodimer composed of 2 chains; the small (or glutamine) chain promotes the hydrolysis of glutamine to ammonia, which is used by the large (or ammonia) chain to synthesize carbamoyl phosphate.

The protein resides in the cytoplasm. The catalysed reaction is hydrogencarbonate + L-glutamine + 2 ATP + H2O = carbamoyl phosphate + L-glutamate + 2 ADP + phosphate + 2 H(+). It carries out the reaction L-glutamine + H2O = L-glutamate + NH4(+). Its pathway is amino-acid biosynthesis; L-arginine biosynthesis; carbamoyl phosphate from bicarbonate: step 1/1. Its function is as follows. Small subunit of the arginine-specific carbamoyl phosphate synthase (CPSase). CPSase catalyzes the formation of carbamoyl phosphate from the ammonia moiety of glutamine, carbonate, and phosphate donated by ATP, constituting the first step of 2 biosynthetic pathways, one leading to arginine and/or urea and the other to pyrimidine nucleotides. The small subunit (glutamine amidotransferase) binds and cleaves glutamine to supply the large subunit with the substrate ammonia. This is Carbamoyl phosphate synthase arginine-specific small chain (CPA1) from Eremothecium gossypii (strain ATCC 10895 / CBS 109.51 / FGSC 9923 / NRRL Y-1056) (Yeast).